The primary structure comprises 150 residues: Small ribosomal subunit protein uS11y (150 aa).

The residue at position 19 (Ser-19) is a Phosphoserine.

It belongs to the universal ribosomal protein uS11 family.

The protein resides in the cytoplasm. The polypeptide is Small ribosomal subunit protein uS11y (RPS14B) (Arabidopsis thaliana (Mouse-ear cress)).